A 143-amino-acid polypeptide reads, in one-letter code: UPF0251 protein CA_C3166 (143 aa).

This sequence belongs to the UPF0251 family.

This is UPF0251 protein CA_C3166 from Clostridium acetobutylicum (strain ATCC 824 / DSM 792 / JCM 1419 / IAM 19013 / LMG 5710 / NBRC 13948 / NRRL B-527 / VKM B-1787 / 2291 / W).